Reading from the N-terminus, the 187-residue chain is Peptide methionine sulfoxide reductase A2-1 (187 aa).

Belongs to the MsrA Met sulfoxide reductase family.

It localises to the cytoplasm. The protein resides in the cytosol. The enzyme catalyses L-methionyl-[protein] + [thioredoxin]-disulfide + H2O = L-methionyl-(S)-S-oxide-[protein] + [thioredoxin]-dithiol. It catalyses the reaction [thioredoxin]-disulfide + L-methionine + H2O = L-methionine (S)-S-oxide + [thioredoxin]-dithiol. Functionally, catalyzes the reduction of methionine sulfoxide (MetSO) to methionine in proteins. Plays a protective role against oxidative stress by restoring activity to proteins that have been inactivated by methionine oxidation. MSRA family specifically reduces the MetSO S-enantiomer. This is Peptide methionine sulfoxide reductase A2-1 (MSRA2-1) from Oryza sativa subsp. japonica (Rice).